Here is a 441-residue protein sequence, read N- to C-terminus: MAARDTICALASGPPPSAIAIIRISGPAVAEIGKSLLASGLPEPKRAALTYIYDSDGALIDQGIALYANAPHSYTGEDTLELYLHGGPAVIDHALRGLTAIAGVRLAEPGEFTRRAFENGKLDLTEAEGVADIIEAETGAQKAQALRQLGGGLTEIYDGWREELTGTLALIEVMIDFPDEGDVPEDTARPILSRLEKIMSEIETALGDRGVGERIRDGFRVAIVGPPNAGKSSILNRLARREAAIVTDIAGTTRDVVEVRLVLGGQVVWIADTAGLRETEDVVEAEGVRRARRAAAEADLRIHVIDGTDPSPPPEQVETQDIIVFNKADQRPAILAPDGALPISVITGEGIDKLESWIAAFVSRRASSVEAPVITRARHREKLVAGLASLTAARDALVSDMGAELAGEDVRMALRQLSSVIGRVDVEDVLGAVFSKFCIGK.

Residues R23, E81, and K121 each coordinate (6S)-5-formyl-5,6,7,8-tetrahydrofolate. Residues 218–363 (GFRVAIVGPP…LESWIAAFVS (146 aa)) enclose the TrmE-type G domain. N228 is a K(+) binding site. GTP is bound by residues 228–233 (NAGKSS), 247–253 (TDIAGTT), 272–275 (DTAG), and 326–329 (NKAD). Residue S232 coordinates Mg(2+). 3 residues coordinate K(+): T247, I249, and T252. Residue T253 coordinates Mg(2+). Residue K441 participates in (6S)-5-formyl-5,6,7,8-tetrahydrofolate binding.

This sequence belongs to the TRAFAC class TrmE-Era-EngA-EngB-Septin-like GTPase superfamily. TrmE GTPase family. As to quaternary structure, homodimer. Heterotetramer of two MnmE and two MnmG subunits. Requires K(+) as cofactor.

Its subcellular location is the cytoplasm. In terms of biological role, exhibits a very high intrinsic GTPase hydrolysis rate. Involved in the addition of a carboxymethylaminomethyl (cmnm) group at the wobble position (U34) of certain tRNAs, forming tRNA-cmnm(5)s(2)U34. The protein is tRNA modification GTPase MnmE of Hyphomonas neptunium (strain ATCC 15444).